Here is a 358-residue protein sequence, read N- to C-terminus: UDP-N-acetylglucosamine--N-acetylmuramyl-(pentapeptide) pyrophosphoryl-undecaprenol N-acetylglucosamine transferase (358 aa).

UDP-N-acetyl-alpha-D-glucosamine contacts are provided by residues 10–12 (TGG), asparagine 124, arginine 165, serine 187, isoleucine 243, and glutamine 288.

The protein belongs to the glycosyltransferase 28 family. MurG subfamily.

The protein localises to the cell inner membrane. The catalysed reaction is di-trans,octa-cis-undecaprenyl diphospho-N-acetyl-alpha-D-muramoyl-L-alanyl-D-glutamyl-meso-2,6-diaminopimeloyl-D-alanyl-D-alanine + UDP-N-acetyl-alpha-D-glucosamine = di-trans,octa-cis-undecaprenyl diphospho-[N-acetyl-alpha-D-glucosaminyl-(1-&gt;4)]-N-acetyl-alpha-D-muramoyl-L-alanyl-D-glutamyl-meso-2,6-diaminopimeloyl-D-alanyl-D-alanine + UDP + H(+). It functions in the pathway cell wall biogenesis; peptidoglycan biosynthesis. Its function is as follows. Cell wall formation. Catalyzes the transfer of a GlcNAc subunit on undecaprenyl-pyrophosphoryl-MurNAc-pentapeptide (lipid intermediate I) to form undecaprenyl-pyrophosphoryl-MurNAc-(pentapeptide)GlcNAc (lipid intermediate II). This chain is UDP-N-acetylglucosamine--N-acetylmuramyl-(pentapeptide) pyrophosphoryl-undecaprenol N-acetylglucosamine transferase, found in Syntrophotalea carbinolica (strain DSM 2380 / NBRC 103641 / GraBd1) (Pelobacter carbinolicus).